We begin with the raw amino-acid sequence, 292 residues long: Homoserine kinase (292 aa).

An ATP-binding site is contributed by 81–91 (RPRSGLGSSGA).

The protein belongs to the GHMP kinase family. Homoserine kinase subfamily.

Its subcellular location is the cytoplasm. The enzyme catalyses L-homoserine + ATP = O-phospho-L-homoserine + ADP + H(+). It functions in the pathway amino-acid biosynthesis; L-threonine biosynthesis; L-threonine from L-aspartate: step 4/5. Catalyzes the ATP-dependent phosphorylation of L-homoserine to L-homoserine phosphate. This is Homoserine kinase from Thermococcus gammatolerans (strain DSM 15229 / JCM 11827 / EJ3).